Reading from the N-terminus, the 410-residue chain is Arginine deiminase (410 aa).

The active-site Amidino-cysteine intermediate is Cys399.

The protein belongs to the arginine deiminase family.

Its subcellular location is the cytoplasm. The enzyme catalyses L-arginine + H2O = L-citrulline + NH4(+). The protein operates within amino-acid degradation; L-arginine degradation via ADI pathway; carbamoyl phosphate from L-arginine: step 1/2. The chain is Arginine deiminase from Listeria monocytogenes serotype 4a (strain HCC23).